Here is a 527-residue protein sequence, read N- to C-terminus: Metal transporter Nramp6 (527 aa).

12 helical membrane-spanning segments follow: residues 38-58 (FFSY…PGNF), 71-91 (ELLW…SLAA), 115-135 (FMLW…EVIG), 143-163 (LFNI…LILL), 173-193 (LEFL…VELH), 221-241 (ISLL…ALVL), 264-284 (GLAL…SGAV), 321-341 (LFAI…TYAG), 364-384 (CLAI…GAGK), 385-405 (LIII…VPLL), 427-447 (TWII…SSFI), and 458-478 (VAIV…LAAI).

The protein belongs to the NRAMP (TC 2.A.55) family. In terms of tissue distribution, expressed in the vascular bundles of shoots, cotyledons, young leaves, sepals and petals, at the top of the flower stem and in the style. Expressed in the peduncle of developing siliques as well as in the septum and the funiculi.

The protein localises to the endomembrane system. Probable intracellular cadmium (Cd) transporter that participates in the distribution or availability of Cd within the cell. The chain is Metal transporter Nramp6 (NRAMP6) from Arabidopsis thaliana (Mouse-ear cress).